Here is a 1239-residue protein sequence, read N- to C-terminus: Anillin (1239 aa).

4 disordered regions span residues 32–67 (CSVPSSSATSASGGDAGVLAPRSRSPGGQSAASGGG), 230–265 (EAPPPKPHLSSRRAEKGPAPLPPKKDEVDEASRTKQ), 493–621 (FDNQ…MCNG), and 684–716 (GSTQDDQSDSGDEQNASRLSLGSKGTTASNSFS). Residues 53 to 63 (RSRSPGGQSAA) are compositionally biased toward low complexity. The interaction with and bundling of F-actin stretch occupies residues 126 to 371 (EQAEGGALNP…ENKGTGGQSQ (246 aa)). Positions 252 to 265 (PKKDEVDEASRTKQ) are enriched in basic and acidic residues. Positions 500–518 (SSVAAQARPPAPAPSRVVR) are enriched in low complexity. Over residues 519-528 (PMPPPPPPPI) the composition is skewed to pro residues. A compositionally biased stretch (basic and acidic residues) spans 551-563 (EDSKRARKSHSDR). Positions 594-610 (DEEETESCMDESDDQSQ) are enriched in acidic residues. The span at 699–716 (ASRLSLGSKGTTASNSFS) shows a compositional bias: polar residues. S712 is modified (phosphoserine). Residue T740 is modified to Phosphothreonine. Phosphoserine is present on residues S744 and S754. T831 carries the post-translational modification Phosphothreonine. Residues 834-861 (DDEEMQNAREVNDASQAQDKIKKLLSEV) are a coiled coil. The region spanning 1106–1230 (SVEYKGFLTM…WCAYLNKALT (125 aa)) is the PH domain.

As to quaternary structure, interacts with and bundles F-actin. Accumulates in the ring canals that interconnect cells of the germline cysts in males and the ovarian follicles in females. These structures develop from arrested contractile rings after a specialized cytokinesis in which the closing of the invaginating plasma membrane is incomplete. Also concentrates in the arrested cleavage furrows that initially link the oocyte to its 15 nurse cells in the early egg chamber and is subsequently lost from these furrows as germline cell division is completed.

The protein localises to the nucleus. It is found in the cytoplasm. It localises to the cytoskeleton. Its subcellular location is the cell cortex. The protein resides in the cell projection. The protein localises to the cilium. It is found in the flagellum. Functionally, required for cytokinesis. Essential for the structural integrity of the cleavage furrow and for completion of cleavage furrow ingression and proper formation of the midbody. Required during cellularization of syncytial embryos for the proper formation and function of the furrow canals, the stable inward folds of the plasma membrane which separate the peripheral nuclei. Also required for the formation of the pole cells, the progenitors of the adult germline which are formed by cytokinesis of the cytoplasmic buds at the posterior pole of the syncytial embryo. Essential for embryonic viability. The sequence is that of Anillin (scra) from Drosophila melanogaster (Fruit fly).